The sequence spans 506 residues: Histidine ammonia-lyase (506 aa).

The 5-imidazolinone (Ala-Gly) cross-link spans 143 to 145 (ASG). S144 is subject to 2,3-didehydroalanine (Ser).

This sequence belongs to the PAL/histidase family. Contains an active site 4-methylidene-imidazol-5-one (MIO), which is formed autocatalytically by cyclization and dehydration of residues Ala-Ser-Gly.

Its subcellular location is the cytoplasm. It catalyses the reaction L-histidine = trans-urocanate + NH4(+). It participates in amino-acid degradation; L-histidine degradation into L-glutamate; N-formimidoyl-L-glutamate from L-histidine: step 1/3. The sequence is that of Histidine ammonia-lyase from Salmonella agona (strain SL483).